The following is a 466-amino-acid chain: Asparagine--tRNA ligase (466 aa).

The protein belongs to the class-II aminoacyl-tRNA synthetase family. In terms of assembly, homodimer.

It is found in the cytoplasm. The catalysed reaction is tRNA(Asn) + L-asparagine + ATP = L-asparaginyl-tRNA(Asn) + AMP + diphosphate + H(+). In Shewanella sp. (strain MR-4), this protein is Asparagine--tRNA ligase.